Consider the following 72-residue polypeptide: Mitotic-spindle organizing protein 1 (72 aa).

This sequence belongs to the MOZART1 family. As to quaternary structure, part of the gamma-tubulin complex.

It localises to the cytoplasm. Its subcellular location is the cytoskeleton. The protein resides in the microtubule organizing center. The protein localises to the centrosome. It is found in the spindle. Its function is as follows. Required for gamma-tubulin complex recruitment to the centrosome. The chain is Mitotic-spindle organizing protein 1 (mzt1) from Xenopus tropicalis (Western clawed frog).